We begin with the raw amino-acid sequence, 336 residues long: Adenylosuccinate synthetase (336 aa).

GTP-binding positions include 12–18 and 42–44; these read GDEGKGK and GHS. The Proton acceptor role is filled by Asp-13. 2 residues coordinate Mg(2+): Asp-13 and Gly-42. IMP is bound by residues 13-16, 40-43, Thr-127, Arg-141, Gln-179, Thr-194, and Arg-256; these read DEGK and NAGH. His-43 functions as the Proton donor in the catalytic mechanism. 252–258 contributes to the substrate binding site; it reads TVTGRRR. Residues Arg-258, 284–286, and 324–326 contribute to the GTP site; these read CLD and STG.

This sequence belongs to the adenylosuccinate synthetase family. As to quaternary structure, homodimer. The cofactor is Mg(2+).

It is found in the cytoplasm. It carries out the reaction IMP + L-aspartate + GTP = N(6)-(1,2-dicarboxyethyl)-AMP + GDP + phosphate + 2 H(+). The protein operates within purine metabolism; AMP biosynthesis via de novo pathway; AMP from IMP: step 1/2. Plays an important role in the de novo pathway of purine nucleotide biosynthesis. Catalyzes the first committed step in the biosynthesis of AMP from IMP. The protein is Adenylosuccinate synthetase of Methanococcus aeolicus (strain ATCC BAA-1280 / DSM 17508 / OCM 812 / Nankai-3).